The sequence spans 266 residues: Putative hydro-lyase VF_1377 (266 aa).

The protein belongs to the D-glutamate cyclase family.

This Aliivibrio fischeri (strain ATCC 700601 / ES114) (Vibrio fischeri) protein is Putative hydro-lyase VF_1377.